The sequence spans 930 residues: MEGDGVPWGSEPVSGPGPGGGGGMIRELCRGFGRYRRYLGRLRQNLRETQKFFRDIKCSHNHTCLSSLTGGGGAERGPAGDVAETGLQAGQLSCISFPPKEEKYLQQIVDCLPCILILGQDCNVKCQLLNLLLGVQVLPTTKLGSEESCKLRRLRFTYGTQTRVSLALPGQYELVHTLVAHQGNWETIPEEDLEVQENNEDAAHVLAELEVTMHHALLQEVDVVVAPCQGLRPTVDVLGDLVNDFLPVITYALHKDELSERDEQELQEIRKYFSFPVFFFKVPKLGSEIIDSSTKRMESERSLLYRQLIDLGYLSSSHWNCGAPGQDTKAQSMLVEQSEKLRHLSTFSHQVLQTRLVDAAKALNLVHCHCLDIFINQAFDMQRDLQITPKRLEYTRKKENELYESLMNIANRKQEEMKDMIVETLNTMKEELLDDATNMEFKDVIVPENGEPVGTREIKCCIRQIQELIISRLNQAVANKLISSVDYLRESFVGTLERCLQSLEKSQDVSVHITSNYLKQILNAAYHVEVTFHSGSSVTRMLWEQIKQIIQRITWVSPPAITLEWKRKVAQEAIESLSASKLAKSICSQFRTRLNSSHEAFAASLRQLEAGHSGRLEKTEDLWLRVRKDHAPRLARLSLESRSLQDVLLHRKPKLGQELGRGQYGVVYLCDNWGGHFPCALKSVVPPDEKHWNDLALEFHYMRSLPKHERLVDLHGSVIDYNYGGGSSIAVLLIMERLHRDLYTGLKAGLTLETRLQIALDVVEGIRFLHSQGLVHRDIKLKNVLLDKQNRAKITDLGFCKPEAMMSGSIVGTPIHMAPELFTGKYDNSVDVYAFGILFWYICSGSVKLPEAFERCASKDHLWNNVRRGARPERLPVFDEECWQLMEACWDGDPLKRPLLGIVQPMLQGIMDRLCKSNSEQPNRGLDDST.

A compositionally biased stretch (low complexity) spans 1 to 14 (MEGDGVPWGSEPVS). Residues 1–22 (MEGDGVPWGSEPVSGPGPGGGG) are disordered. Coiled-coil stretches lie at residues 190–216 (EEDLEVQENNEDAAHVLAELEVTMHHA) and 396–432 (RKKENELYESLMNIANRKQEEMKDMIVETLNTMKEEL). The 255-residue stretch at 653–907 (PKLGQELGRG…PLLGIVQPML (255 aa)) folds into the Protein kinase domain. ATP is bound by residues 659-667 (LGRGQYGVV) and K682. D778 acts as the Proton acceptor in catalysis.

This sequence belongs to the protein kinase superfamily. Ser/Thr protein kinase family.

It localises to the cytoplasm. Its subcellular location is the cell membrane. The protein resides in the apical cell membrane. The protein localises to the basolateral cell membrane. It is found in the cell junction. It catalyses the reaction L-seryl-[protein] + ATP = O-phospho-L-seryl-[protein] + ADP + H(+). The enzyme catalyses L-threonyl-[protein] + ATP = O-phospho-L-threonyl-[protein] + ADP + H(+). It carries out the reaction L-tyrosyl-[protein] + ATP = O-phospho-L-tyrosyl-[protein] + ADP + H(+). Its function is as follows. Acts as a positive regulator of ERK phosphorylation downstream of fibroblast growth factor-receptor activation. Involved in the regulation of both caspase-dependent apoptosis and caspase-independent cell death. In the skin, it plays a predominant role in suppressing caspase-dependent apoptosis in response to UV stress in a range of dermal cell types. The chain is Dual serine/threonine and tyrosine protein kinase (DSTYK) from Pan troglodytes (Chimpanzee).